The chain runs to 150 residues: Interferon antagonist OPG027 (150 aa).

The protein belongs to the orthopoxvirus OPG027 family.

Its function is as follows. Inhibits antiviral activity induced by type I interferons. Does not block signal transduction of IFN, but is important to counteract the host antiviral state induced by a pre-treatment with IFN. The sequence is that of Interferon antagonist OPG027 (OPG027) from Cynomys gunnisoni (Gunnison's prairie dog).